The sequence spans 278 residues: Maltodextrin transport system permease protein MdxG (278 aa).

The next 6 helical transmembrane spans lie at 12–32 (ICTY…LLIT), 74–94 (TLVI…LAGY), 108–128 (LIFF…AFYV), 131–151 (MLIG…GGGI), 183–203 (IFAS…ALWA), and 242–262 (VALF…LFFF). Residues 71 to 263 (YSNTLVIALS…LPICVLFFFL (193 aa)) form the ABC transmembrane type-1 domain.

The protein belongs to the binding-protein-dependent transport system permease family. MalFG subfamily. In terms of assembly, the complex is composed of two ATP-binding proteins (MsmX), two transmembrane proteins (MdxF and MdxG) and a solute-binding protein (MdxE).

Its subcellular location is the cell membrane. Its function is as follows. Part of the ABC transporter complex involved in maltodextrin import. Probably responsible for the translocation of the substrate across the membrane. This Bacillus subtilis (strain 168) protein is Maltodextrin transport system permease protein MdxG (mdxG).